The sequence spans 455 residues: Homogentisate 1,2-dioxygenase (455 aa).

Histidine 308 (proton acceptor) is an active-site residue. 2 residues coordinate Fe cation: histidine 351 and glutamate 357. 2 residues coordinate homogentisate: tyrosine 366 and histidine 387. Histidine 387 serves as a coordination point for Fe cation.

This sequence belongs to the homogentisate dioxygenase family. In terms of assembly, hexamer; dimer of trimers. It depends on Fe cation as a cofactor.

It catalyses the reaction homogentisate + O2 = 4-maleylacetoacetate + H(+). Its pathway is amino-acid degradation; L-phenylalanine degradation; acetoacetate and fumarate from L-phenylalanine: step 4/6. Functionally, involved in the catabolism of homogentisate (2,5-dihydroxyphenylacetate or 2,5-OH-PhAc), a central intermediate in the degradation of phenylalanine and tyrosine. Catalyzes the oxidative ring cleavage of the aromatic ring of homogentisate to yield maleylacetoacetate. The sequence is that of Homogentisate 1,2-dioxygenase from Xanthomonas campestris pv. campestris (strain 8004).